The sequence spans 332 residues: Ketol-acid reductoisomerase (NADP(+)) (332 aa).

A KARI N-terminal Rossmann domain is found at A2–T182. Residues Y25 to Q28, S51, S53, and D83 to Q86 each bind NADP(+). H108 is an active-site residue. G134 contacts NADP(+). Residues T183–L327 enclose the KARI C-terminal knotted domain. Mg(2+) contacts are provided by D191, E195, E227, and E231. A substrate-binding site is contributed by S252.

Belongs to the ketol-acid reductoisomerase family. The cofactor is Mg(2+).

It carries out the reaction (2R)-2,3-dihydroxy-3-methylbutanoate + NADP(+) = (2S)-2-acetolactate + NADPH + H(+). It catalyses the reaction (2R,3R)-2,3-dihydroxy-3-methylpentanoate + NADP(+) = (S)-2-ethyl-2-hydroxy-3-oxobutanoate + NADPH + H(+). It functions in the pathway amino-acid biosynthesis; L-isoleucine biosynthesis; L-isoleucine from 2-oxobutanoate: step 2/4. The protein operates within amino-acid biosynthesis; L-valine biosynthesis; L-valine from pyruvate: step 2/4. Involved in the biosynthesis of branched-chain amino acids (BCAA). Catalyzes an alkyl-migration followed by a ketol-acid reduction of (S)-2-acetolactate (S2AL) to yield (R)-2,3-dihydroxy-isovalerate. In the isomerase reaction, S2AL is rearranged via a Mg-dependent methyl migration to produce 3-hydroxy-3-methyl-2-ketobutyrate (HMKB). In the reductase reaction, this 2-ketoacid undergoes a metal-dependent reduction by NADPH to yield (R)-2,3-dihydroxy-isovalerate. This Sulfurihydrogenibium sp. (strain YO3AOP1) protein is Ketol-acid reductoisomerase (NADP(+)).